The chain runs to 338 residues: MVVKVGINGFGRIGRIVFRNAIEHDDIQIVAVNDPFIEPKYAEYMLRYDSTHGNFKGTIAVEGSDLVVNGKKVKFYTERDPSAIPWSETGADYIVESTGVFTTTEKASAHLKGGAKKVIISAPSADAPMYVMGVNNESYDGSANVISNASCTTNCLAPLAKVIHDNFTIVEGLMTTVHSYTATQKTVDGPSSKDWRGGRTAAQNIIPSSTGAAKAVGKVIPDLNGKLTGMSMRVPTANVSVVDLTVRIEKGASYDEIKEVVKKASEGPLAGILAYTEDEVVSSDMNGNPASSIFDAKAGISLNKNFVKLVSWYDNEWGYSRRVLDLISYVAKVDASKA.

NAD(+) contacts are provided by residues arginine 12 to isoleucine 13, aspartate 34, and arginine 79. Residues serine 150–threonine 152, threonine 181, threonine 210–glycine 211, and arginine 233 contribute to the D-glyceraldehyde 3-phosphate site. The active-site Nucleophile is the cysteine 151. Asparagine 315 is a binding site for NAD(+).

This sequence belongs to the glyceraldehyde-3-phosphate dehydrogenase family. In terms of assembly, homotetramer.

Its subcellular location is the cytoplasm. It catalyses the reaction D-glyceraldehyde 3-phosphate + phosphate + NAD(+) = (2R)-3-phospho-glyceroyl phosphate + NADH + H(+). It functions in the pathway carbohydrate degradation; glycolysis; pyruvate from D-glyceraldehyde 3-phosphate: step 1/5. The polypeptide is Glyceraldehyde-3-phosphate dehydrogenase (GPD) (Sordaria macrospora).